Reading from the N-terminus, the 483-residue chain is Argininosuccinate lyase (483 aa).

It belongs to the lyase 1 family. Argininosuccinate lyase subfamily.

Its subcellular location is the cytoplasm. It carries out the reaction 2-(N(omega)-L-arginino)succinate = fumarate + L-arginine. Its pathway is amino-acid biosynthesis; L-arginine biosynthesis; L-arginine from L-ornithine and carbamoyl phosphate: step 3/3. The protein is Argininosuccinate lyase of Albidiferax ferrireducens (strain ATCC BAA-621 / DSM 15236 / T118) (Rhodoferax ferrireducens).